A 477-amino-acid polypeptide reads, in one-letter code: Glutamate--tRNA ligase (477 aa).

The short motif at 12 to 22 (PSPTGMFHVGG) is the 'HIGH' region element. Residues Cys106, Cys108, Cys128, and Asp130 each contribute to the Zn(2+) site. A 'KMSKS' region motif is present at residues 238–242 (KLSKR). Position 241 (Lys241) interacts with ATP.

This sequence belongs to the class-I aminoacyl-tRNA synthetase family. Glutamate--tRNA ligase type 1 subfamily. In terms of assembly, monomer. The cofactor is Zn(2+).

It localises to the cytoplasm. It catalyses the reaction tRNA(Glu) + L-glutamate + ATP = L-glutamyl-tRNA(Glu) + AMP + diphosphate. Its function is as follows. Catalyzes the attachment of glutamate to tRNA(Glu) in a two-step reaction: glutamate is first activated by ATP to form Glu-AMP and then transferred to the acceptor end of tRNA(Glu). In Thermobifida fusca (strain YX), this protein is Glutamate--tRNA ligase.